A 259-amino-acid polypeptide reads, in one-letter code: Ras-related protein Rab-34 (259 aa).

Position 1 is an N-acetylmethionine (Met-1). GTP-binding residues include Ser-62, Val-63, Gly-64, Lys-65, Thr-66, Asp-78, Tyr-81, and Thr-84. A Mg(2+)-binding site is contributed by Thr-66. A Switch 1 motif is present at residues 71-89 (RFCKDTFDKNYKATIGVDF). Residues Thr-84 and Asp-107 each coordinate Mg(2+). A Switch 2 motif is present at residues 108–127 (TAGQERFKCIASTYYRGAQA). Gly-110, Lys-167, Asp-169, and Ser-198 together coordinate GTP. Phosphoserine occurs at positions 241 and 244. S-geranylgeranyl cysteine attachment occurs at residues Cys-257 and Cys-258.

It belongs to the small GTPase superfamily. Rab family. In terms of assembly, interacts with RILP. The GTP-bound form interacts with REP15. Requires Mg(2+) as cofactor.

It is found in the cytoplasm. The protein localises to the golgi apparatus. It localises to the cytoplasmic vesicle. Its subcellular location is the phagosome. The protein resides in the phagosome membrane. It is found in the cell projection. The protein localises to the cilium. It localises to the cytoskeleton. Its subcellular location is the microtubule organizing center. The protein resides in the centrosome. It is found in the centriole. It catalyses the reaction GTP + H2O = GDP + phosphate + H(+). With respect to regulation, regulated by guanine nucleotide exchange factors (GEFs) which promote the exchange of bound GDP for free GTP. Regulated by GTPase activating proteins (GAPs) which increase the GTP hydrolysis activity. Inhibited by GDP dissociation inhibitors (GDIs). Functionally, the small GTPases Rab are key regulators of intracellular membrane trafficking, from the formation of transport vesicles to their fusion with membranes. Rabs cycle between an inactive GDP-bound form and an active GTP-bound form that is able to recruit to membranes different sets of downstream effectors directly responsible for vesicle formation, movement, tethering and fusion. RAB34 transports protein involved in the redistribution of lysosomes to the peri-Golgi region. Plays a role in the maturation of phagosomes that engulf pathogens, such as S.aureus and M.tuberculosis. Plays a role in the fusion of phagosomes with lysosomes. Involved in ciliogenesis. In particular, it is required for early steps of the intracellular cilium assembly pathway initiated by trafficking and docking of ciliary vesicles to the centrioles in the cytoplasm, followed by axoneme formation in the cytoplasm. After axoneme elongation, the centrioles migrate close to the cell surface so that ciliary vesicles can fuse with the plasma membrane to expose cilia to the extracellular space. It seems dispensable for ciliogenesis via the extracellular pathway where cilium assembly begins after migration and docking of the centriole to the plasma membrane. Also acts as a positive regulator of hedgehog signaling and regulates ciliary function. This chain is Ras-related protein Rab-34, found in Homo sapiens (Human).